A 286-amino-acid chain; its full sequence is uncharacterized protein (286 aa).

This is an uncharacterized protein from Schizosaccharomyces pombe (strain 972 / ATCC 24843) (Fission yeast).